The primary structure comprises 338 residues: Flap endonuclease 1 (338 aa).

The segment at 1–98 (MGTDIGDLLQ…ETLSRRKEVR (98 aa)) is N-domain. Residues D27, D80, E152, E154, D173, D175, and D236 each coordinate Mg(2+). Positions 116–257 (AAYKYAQASS…TALKLIKKHG (142 aa)) are I-domain. The segment at 330 to 338 (RQKTLDQWF) is interaction with PCNA.

Belongs to the XPG/RAD2 endonuclease family. FEN1 subfamily. Interacts with PCNA. PCNA stimulates the nuclease activity without altering cleavage specificity. The cofactor is Mg(2+).

Functionally, structure-specific nuclease with 5'-flap endonuclease and 5'-3' exonuclease activities involved in DNA replication and repair. During DNA replication, cleaves the 5'-overhanging flap structure that is generated by displacement synthesis when DNA polymerase encounters the 5'-end of a downstream Okazaki fragment. Binds the unpaired 3'-DNA end and kinks the DNA to facilitate 5' cleavage specificity. Cleaves one nucleotide into the double-stranded DNA from the junction in flap DNA, leaving a nick for ligation. Also involved in the base excision repair (BER) pathway. Acts as a genome stabilization factor that prevents flaps from equilibrating into structures that lead to duplications and deletions. Also possesses 5'-3' exonuclease activity on nicked or gapped double-stranded DNA. The protein is Flap endonuclease 1 of Methanosarcina acetivorans (strain ATCC 35395 / DSM 2834 / JCM 12185 / C2A).